A 340-amino-acid chain; its full sequence is GTP 3',8-cyclase (340 aa).

One can recognise a Radical SAM core domain in the interval 8 to 227; the sequence is KLGRPIRDLR…SMIQEEFDIE (220 aa). Position 17 (Arg17) interacts with GTP. Residues Cys24 and Cys28 each coordinate [4Fe-4S] cluster. Tyr30 is an S-adenosyl-L-methionine binding site. Cys31 lines the [4Fe-4S] cluster pocket. Arg71 lines the GTP pocket. Gly75 serves as a coordination point for S-adenosyl-L-methionine. Thr102 provides a ligand contact to GTP. An S-adenosyl-L-methionine-binding site is contributed by Ser126. Lys163 is a binding site for GTP. Residue Met197 coordinates S-adenosyl-L-methionine. [4Fe-4S] cluster is bound by residues Cys261 and Cys264. 266–268 contacts GTP; it reads RAR. A [4Fe-4S] cluster-binding site is contributed by Cys278.

This sequence belongs to the radical SAM superfamily. MoaA family. In terms of assembly, monomer and homodimer. [4Fe-4S] cluster is required as a cofactor.

The enzyme catalyses GTP + AH2 + S-adenosyl-L-methionine = (8S)-3',8-cyclo-7,8-dihydroguanosine 5'-triphosphate + 5'-deoxyadenosine + L-methionine + A + H(+). Its pathway is cofactor biosynthesis; molybdopterin biosynthesis. Catalyzes the cyclization of GTP to (8S)-3',8-cyclo-7,8-dihydroguanosine 5'-triphosphate. This chain is GTP 3',8-cyclase, found in Staphylococcus carnosus (strain TM300).